The sequence spans 388 residues: Protein DVU_0534 (388 aa).

The next 10 membrane-spanning stretches (helical) occupy residues 10–31 (LMTP…LTVL), 57–78 (LLCG…YLFG), 89–106 (AITT…ALNY), 130–144 (EVGL…VLFV), 166–191 (LTLV…LFLI), 199–222 (LWYS…SMVI), 254–265 (AASFVLAGYFMI), 291–306 (MLGF…ALGV), 316–328 (FASV…IVMN), and 354–368 (IGIS…ITVY).

The protein belongs to the NrfD family.

The protein localises to the cell membrane. Its function is as follows. HMWC (high-molecular-weight cytochrome c), ORF2, ORF3, ORF4, ORF5 and ORF6 in the HMC operon form a transmembrane protein complex that allows electron flow from the periplasmic hydrogenase to the cytoplasmic enzymes that catalyze reduction of sulfates. This chain is Protein DVU_0534, found in Nitratidesulfovibrio vulgaris (strain ATCC 29579 / DSM 644 / CCUG 34227 / NCIMB 8303 / VKM B-1760 / Hildenborough) (Desulfovibrio vulgaris).